We begin with the raw amino-acid sequence, 368 residues long: Divinyl chlorophyll a/b light-harvesting protein PcbA (368 aa).

The next 6 membrane-spanning stretches (helical) occupy residues 27–47, 63–83, 89–109, 203–223, 243–263, and 307–327; these read FIAS…ANTL, GFVV…NGVI, MLVV…GAML, VMGG…WHIF, FVLS…AFWA, and LSNF…WHGL.

Belongs to the PsbB/PsbC family. IsiA/Pcb subfamily. The antenna complex consists of divinyl chlorophylls (a and b) and divinyl chlorophyll a/b binding proteins. Forms complexes with PSII, consisting of a PSII dimer and 4 or 8 PcbA subunits. These complexes are also found under conditions of iron-starvation. The cofactor is divinyl chlorophyll a. Divinyl chlorophyll b is required as a cofactor.

It localises to the cellular thylakoid membrane. Functionally, the antenna complex functions as a light receptor, it captures and delivers excitation energy to photosystems II. The Prochlorales pcb genes are not related to higher plant LHCs. This Prochlorococcus marinus (strain MIT 9313) protein is Divinyl chlorophyll a/b light-harvesting protein PcbA (pcbA).